Here is a 374-residue protein sequence, read N- to C-terminus: Nuclear hormone receptor family member nhr-57 (374 aa).

The nuclear receptor DNA-binding region spans R7–A84. NR C4-type zinc fingers lie at residues C10–C30 and C48–C67. The NR LBD domain maps to Q124–Q374.

The protein belongs to the nuclear hormone receptor family.

It is found in the nucleus. Functionally, orphan nuclear receptor. This is Nuclear hormone receptor family member nhr-57 (nhr-57) from Caenorhabditis elegans.